The primary structure comprises 457 residues: Argininosuccinate lyase (457 aa).

The protein belongs to the lyase 1 family. Argininosuccinate lyase subfamily.

It is found in the cytoplasm. The catalysed reaction is 2-(N(omega)-L-arginino)succinate = fumarate + L-arginine. Its pathway is amino-acid biosynthesis; L-arginine biosynthesis; L-arginine from L-ornithine and carbamoyl phosphate: step 3/3. In Haemophilus influenzae (strain ATCC 51907 / DSM 11121 / KW20 / Rd), this protein is Argininosuccinate lyase.